The primary structure comprises 378 residues: tRNA (guanine(37)-N(1))-methyltransferase (378 aa).

Residues histidine 196, 234–235 (DL), 262–263 (DA), and asparagine 282 each bind S-adenosyl-L-methionine.

It belongs to the class I-like SAM-binding methyltransferase superfamily. TRM5/TYW2 family. Monomer.

The protein localises to the mitochondrion matrix. Its subcellular location is the nucleus. It localises to the cytoplasm. It catalyses the reaction guanosine(37) in tRNA + S-adenosyl-L-methionine = N(1)-methylguanosine(37) in tRNA + S-adenosyl-L-homocysteine + H(+). In terms of biological role, specifically methylates the N1 position of guanosine-37 in various cytoplasmic and mitochondrial tRNAs. Methylation is not dependent on the nature of the nucleoside 5' of the target nucleoside. This is the first step in the biosynthesis of wybutosine (yW), a modified base adjacent to the anticodon of tRNAs and required for accurate decoding. The chain is tRNA (guanine(37)-N(1))-methyltransferase from Trichomonas vaginalis (strain ATCC PRA-98 / G3).